Reading from the N-terminus, the 206-residue chain is Thymidylate kinase (206 aa).

Residue 10–17 (GVDGVGKT) coordinates ATP.

This sequence belongs to the thymidylate kinase family.

The enzyme catalyses dTMP + ATP = dTDP + ADP. Its function is as follows. Phosphorylation of dTMP to form dTDP in both de novo and salvage pathways of dTTP synthesis. The protein is Thymidylate kinase of Bifidobacterium longum (strain DJO10A).